The chain runs to 179 residues: Probable phosphopantothenoylcysteine decarboxylase (179 aa).

N124 is a binding site for substrate. Residue C157 is the Proton donor of the active site.

It belongs to the HFCD (homooligomeric flavin containing Cys decarboxylase) superfamily. FMN serves as cofactor.

It carries out the reaction N-[(R)-4-phosphopantothenoyl]-L-cysteine + H(+) = (R)-4'-phosphopantetheine + CO2. The protein operates within cofactor biosynthesis; coenzyme A biosynthesis; CoA from (R)-pantothenate: step 3/5. Functionally, catalyzes the decarboxylation of 4'-phosphopantothenoylcysteine to 4'-phosphopantetheine. The protein is Probable phosphopantothenoylcysteine decarboxylase (coaC) of Streptococcus mutans serotype c (strain ATCC 700610 / UA159).